Consider the following 432-residue polypeptide: Histidine--tRNA ligase (432 aa).

Positions 412-432 (TQVPLAAFPPEEGRPTYDDYA) are disordered. Residues 422 to 432 (EEGRPTYDDYA) are compositionally biased toward basic and acidic residues.

This sequence belongs to the class-II aminoacyl-tRNA synthetase family.

The protein localises to the cytoplasm. The catalysed reaction is tRNA(His) + L-histidine + ATP = L-histidyl-tRNA(His) + AMP + diphosphate + H(+). This is Histidine--tRNA ligase from Natronomonas pharaonis (strain ATCC 35678 / DSM 2160 / CIP 103997 / JCM 8858 / NBRC 14720 / NCIMB 2260 / Gabara) (Halobacterium pharaonis).